Reading from the N-terminus, the 274-residue chain is Undecaprenyl-diphosphatase 1 (274 aa).

A run of 8 helical transmembrane segments spans residues 7–27 (LEIFKAVILGIVQGITEWLPV), 48–68 (FISTFLVVIQFGSILAVLVIF), 88–108 (VRLWLKVIIAVIPSGVIGILF), 115–135 (LFFNSTVVAIALIVYGIIMIG), 151–171 (VTYKLALCIGLFQCLALIPGT), 189–209 (YVAAEFSFFLAIPTMLGASAL), 221–241 (FEWLILGVGSVVAFVVSIVVI), and 253–273 (FKVFGYYRIVLGIVVLAYFFL).

The protein belongs to the UppP family.

The protein resides in the cell membrane. It carries out the reaction di-trans,octa-cis-undecaprenyl diphosphate + H2O = di-trans,octa-cis-undecaprenyl phosphate + phosphate + H(+). In terms of biological role, catalyzes the dephosphorylation of undecaprenyl diphosphate (UPP). Confers resistance to bacitracin. This Clostridioides difficile (strain 630) (Peptoclostridium difficile) protein is Undecaprenyl-diphosphatase 1.